The following is a 322-amino-acid chain: Digestive cysteine proteinase 1 (322 aa).

The signal sequence occupies residues 1–16 (MKVVALFLFGLALAAA). A propeptide spans 17 to 105 (NPSWEEFKGK…VFTSTDAAPE (89 aa)) (activation peptide). Intrachain disulfides connect cysteine 126–cysteine 170, cysteine 160–cysteine 203, and cysteine 262–cysteine 311. Residue cysteine 129 is part of the active site. Active-site residues include histidine 269 and asparagine 289.

It belongs to the peptidase C1 family.

Its activity is regulated as follows. Inhibited by E-64, antipain, leupeptin, heavy metal ions, iodoacetic acid, dithionitrobenzene, p-hydroxymercuri-benzoate; activated by mercaptoethanol and dithiothreitol. This chain is Digestive cysteine proteinase 1 (LCP1), found in Homarus americanus (American lobster).